Consider the following 171-residue polypeptide: Protein E6 (171 aa).

The segment at 1–28 is disordered; that stretch reads MATTDSSTDSADEGPSPKSSYCDTTETK. Residues 17 to 28 are compositionally biased toward polar residues; sequence PKSSYCDTTETK. Zinc fingers lie at residues 58–94 and 131–167; these read CNFC…CRVC and CYTC…CRLC.

The protein belongs to the papillomaviridae E6 protein family. As to quaternary structure, forms homodimers. Interacts with ubiquitin-protein ligase UBE3A/E6-AP; this interaction stimulates UBE3A ubiquitin activity. Interacts with host BAK1.

The protein localises to the host cytoplasm. The protein resides in the host nucleus. Functionally, plays a major role in the induction and maintenance of cellular transformation. E6 associates with host UBE3A/E6-AP ubiquitin-protein ligase and modulates its activity. Protects host keratinocytes from apoptosis by mediating the degradation of host BAK1. May also inhibit host immune response. The chain is Protein E6 from Human papillomavirus 14.